We begin with the raw amino-acid sequence, 147 residues long: Acidic phospholipase A2 S7-48J (147 aa).

The signal sequence occupies residues 1 to 19 (MYPAHLLVLLAVCVSLLGA). The propeptide occupies 20-27 (SDIPPQPL). 7 disulfides stabilise this stretch: Cys-38–Cys-99, Cys-54–Cys-146, Cys-56–Cys-72, Cys-71–Cys-127, Cys-78–Cys-120, Cys-88–Cys-113, and Cys-106–Cys-118. Residues Tyr-55, Gly-57, and Gly-59 each coordinate Ca(2+). The active site involves His-75. Asp-76 provides a ligand contact to Ca(2+). The active site involves Asp-121.

The protein belongs to the phospholipase A2 family. Group I subfamily. D49 sub-subfamily. It depends on Ca(2+) as a cofactor. As to expression, expressed by the venom gland.

It localises to the secreted. It carries out the reaction a 1,2-diacyl-sn-glycero-3-phosphocholine + H2O = a 1-acyl-sn-glycero-3-phosphocholine + a fatty acid + H(+). Snake venom phospholipase A2 (PLA2) that inhibits collagen-induced platelet aggregation. PLA2 catalyzes the calcium-dependent hydrolysis of the 2-acyl groups in 3-sn-phosphoglycerides. The sequence is that of Acidic phospholipase A2 S7-48J from Austrelaps superbus (Lowland copperhead snake).